A 300-amino-acid polypeptide reads, in one-letter code: Protoheme IX farnesyltransferase 1 (300 aa).

8 helical membrane-spanning segments follow: residues 26-46 (VVVL…RAGV), 48-68 (WTVL…AAAV), 97-117 (AALA…LTFT), 120-140 (LTAW…TGFL), 148-168 (IVIG…AATG), 174-194 (PLLL…ALAI), 226-246 (FALL…VLYL), and 280-300 (IYYL…LLNL).

The protein belongs to the UbiA prenyltransferase family. Protoheme IX farnesyltransferase subfamily.

Its subcellular location is the cell inner membrane. It carries out the reaction heme b + (2E,6E)-farnesyl diphosphate + H2O = Fe(II)-heme o + diphosphate. It functions in the pathway porphyrin-containing compound metabolism; heme O biosynthesis; heme O from protoheme: step 1/1. Functionally, converts heme B (protoheme IX) to heme O by substitution of the vinyl group on carbon 2 of heme B porphyrin ring with a hydroxyethyl farnesyl side group. In Pseudomonas fluorescens (strain ATCC BAA-477 / NRRL B-23932 / Pf-5), this protein is Protoheme IX farnesyltransferase 1.